The primary structure comprises 117 residues: ISPLGSVTKKNQDSTAYNWTGNKTANGNWPVLGICAVHRKKDIGGSGNSPVIPFGTTLKTDKDIWLPDGVGYKSSFNVDDTGSGPKKTDYWIDIYYSKDTKAAINYGVVKLSYTYST.

Residue Asp-89 is part of the active site.

It catalyses the reaction Hydrolysis of (1-&gt;4)-beta-linkages between N-acetylmuramic acid and N-acetyl-D-glucosamine residues in a peptidoglycan and between N-acetyl-D-glucosamine residues in chitodextrins.. This chain is B-enzyme (lyzB), found in Bacillus subtilis.